The primary structure comprises 858 residues: Adenylate cyclase, germination specific (858 aa).

Over 1 to 18 the chain is Cytoplasmic; the sequence is MKKTFVKILSKSYVEGYP. A helical; Signal-anchor for type II membrane protein transmembrane segment spans residues 19–41; sequence VGFFIGLIILAIFGSMVCIFSFM. At 42-858 the chain is on the extracellular side; the sequence is HYSEEENSNI…DENVESKKNK (817 aa). Residues 86 to 317 enclose the CHASE domain; it reads VNPNFDRNDF…DCVLKLWIFT (232 aa). Positions 396-526 constitute a Guanylate cyclase domain; sequence CVFFLDIAGF…DTVNVASRME (131 aa). Residues Asp-401, Ile-402, and Asp-445 each coordinate Mg(2+). 3 disordered regions span residues 650–691, 767–803, and 827–858; these read YYYH…YHDT, SDNVNNYENNNNFSDKIENNDGDNNNINDNNYKSTNE, and ENCDNNDDNNNNNNNNNNNNNNDENVESKKNK. Composition is skewed to low complexity over residues 767-778, 788-797, and 834-849; these read SDNVNNYENNNN, GDNNNINDNN, and DNNNNNNNNNNNNNND.

Belongs to the adenylyl cyclase class-4/guanylyl cyclase family.

It localises to the membrane. It carries out the reaction ATP = 3',5'-cyclic AMP + diphosphate. Its activity is regulated as follows. Insensitive to guanine nucleotides. Has a large extracellular domain which may be involved in the recognition of an extracellular signal present during germination, leading to activation or inhibition of cAMP synthesis by the cytoplasmic domain. This is Adenylate cyclase, germination specific (acgA) from Dictyostelium discoideum (Social amoeba).